The sequence spans 259 residues: Deoxyribose-phosphate aldolase (259 aa).

Asp102 (proton donor/acceptor) is an active-site residue. Lys167 (schiff-base intermediate with acetaldehyde) is an active-site residue. The active-site Proton donor/acceptor is Lys201.

It belongs to the DeoC/FbaB aldolase family. DeoC type 2 subfamily.

Its subcellular location is the cytoplasm. It carries out the reaction 2-deoxy-D-ribose 5-phosphate = D-glyceraldehyde 3-phosphate + acetaldehyde. Its pathway is carbohydrate degradation; 2-deoxy-D-ribose 1-phosphate degradation; D-glyceraldehyde 3-phosphate and acetaldehyde from 2-deoxy-alpha-D-ribose 1-phosphate: step 2/2. Catalyzes a reversible aldol reaction between acetaldehyde and D-glyceraldehyde 3-phosphate to generate 2-deoxy-D-ribose 5-phosphate. The chain is Deoxyribose-phosphate aldolase from Escherichia coli O8 (strain IAI1).